Reading from the N-terminus, the 521-residue chain is Medium/long-chain-fatty-acid--[acyl-carrier-protein] ligase MbtM (521 aa).

The protein belongs to the ATP-dependent AMP-binding enzyme family.

The catalysed reaction is a long-chain fatty acid + holo-[ACP] + ATP = a long-chain fatty acyl-[ACP] + AMP + diphosphate. The enzyme catalyses a medium-chain fatty acid + holo-[ACP] + ATP = a medium-chain fatty acyl-[ACP] + AMP + diphosphate. The protein operates within siderophore biosynthesis; mycobactin biosynthesis. In terms of biological role, activates lipidic moieties required for mycobactin biosynthesis. Converts medium- to long-chain aliphatic fatty acids into acyl adenylate, which is further transferred on to the phosphopantetheine arm of the carrier protein MbtL. This is Medium/long-chain-fatty-acid--[acyl-carrier-protein] ligase MbtM (mbtM) from Mycobacterium tuberculosis (strain CDC 1551 / Oshkosh).